Here is a 1107-residue protein sequence, read N- to C-terminus: Lon protease homolog, mitochondrial (1107 aa).

Residues 1 to 31 (MLSRQRIPRILASRTSLAHSIRSFTSTTSSI) constitute a mitochondrion transit peptide. Disordered stretches follow at residues 32–152 (RPVA…PGDK) and 273–329 (PEAA…PYEP). Residues 51–60 (TNLSSFSTYT) show a composition bias toward polar residues. A compositionally biased stretch (basic and acidic residues) spans 80–101 (EEERKANVEHAEAEAKEAESKQ). Over residues 122–141 (GAAGGSSAGSGSGADGGSGD) the composition is skewed to gly residues. A compositionally biased stretch (basic and acidic residues) spans 142 to 152 (GGKRGRKPGDK). Residues 166-441 (VMAIPIAKRP…KALLVLKKEH (276 aa)) form the Lon N-terminal domain. Position 594–601 (594–601 (GPPGVGKT)) interacts with ATP. The interval 808 to 858 (PESEALTEEGKAAQEETEKKKSEEAASGETSSPKAATEASEKETTEKPRVA) is disordered. The segment covering 815–831 (EEGKAAQEETEKKKSEE) has biased composition (basic and acidic residues). Residues 832–845 (AASGETSSPKAATE) are compositionally biased toward low complexity. Residues 846-856 (ASEKETTEKPR) are compositionally biased toward basic and acidic residues. The region spanning 891–1077 (VTPPGVTMGL…SEVFDLIFPK (187 aa)) is the Lon proteolytic domain. Catalysis depends on residues Ser983 and Lys1026. The segment at 1085–1107 (KSRIIEDDKSEKEESKKKNDDDE) is disordered.

The protein belongs to the peptidase S16 family. As to quaternary structure, homohexamer or homoheptamer. Organized in a ring with a central cavity.

The protein resides in the mitochondrion matrix. The enzyme catalyses Hydrolysis of proteins in presence of ATP.. In terms of biological role, ATP-dependent serine protease that mediates the selective degradation of misfolded, unassembled or oxidatively damaged polypeptides as well as certain short-lived regulatory proteins in the mitochondrial matrix. May also have a chaperone function in the assembly of inner membrane protein complexes. Participates in the regulation of mitochondrial gene expression and in the maintenance of the integrity of the mitochondrial genome. Binds to mitochondrial DNA in a site-specific manner. This is Lon protease homolog, mitochondrial (pim1) from Neurospora crassa (strain ATCC 24698 / 74-OR23-1A / CBS 708.71 / DSM 1257 / FGSC 987).